Here is a 161-residue protein sequence, read N- to C-terminus: 2-C-methyl-D-erythritol 2,4-cyclodiphosphate synthase (161 aa).

Aspartate 10 and histidine 12 together coordinate a divalent metal cation. Residues 10–12 (DVH) and 36–37 (HS) contribute to the 4-CDP-2-C-methyl-D-erythritol 2-phosphate site. Residue histidine 44 coordinates a divalent metal cation. 4-CDP-2-C-methyl-D-erythritol 2-phosphate contacts are provided by residues 58–60 (DIG), 63–67 (FPDTD), 102–108 (AQAPKML), 134–137 (TTTE), phenylalanine 141, and arginine 144.

It belongs to the IspF family. As to quaternary structure, homotrimer. It depends on a divalent metal cation as a cofactor.

It carries out the reaction 4-CDP-2-C-methyl-D-erythritol 2-phosphate = 2-C-methyl-D-erythritol 2,4-cyclic diphosphate + CMP. The protein operates within isoprenoid biosynthesis; isopentenyl diphosphate biosynthesis via DXP pathway; isopentenyl diphosphate from 1-deoxy-D-xylulose 5-phosphate: step 4/6. In terms of biological role, involved in the biosynthesis of isopentenyl diphosphate (IPP) and dimethylallyl diphosphate (DMAPP), two major building blocks of isoprenoid compounds. Catalyzes the conversion of 4-diphosphocytidyl-2-C-methyl-D-erythritol 2-phosphate (CDP-ME2P) to 2-C-methyl-D-erythritol 2,4-cyclodiphosphate (ME-CPP) with a corresponding release of cytidine 5-monophosphate (CMP). The sequence is that of 2-C-methyl-D-erythritol 2,4-cyclodiphosphate synthase from Shewanella loihica (strain ATCC BAA-1088 / PV-4).